A 226-amino-acid polypeptide reads, in one-letter code: Orotidine 5'-phosphate decarboxylase (226 aa).

Substrate contacts are provided by residues Asp9, Lys31, 58–67 (DLKLYDIPNT), Thr115, Arg176, Gln184, Gly204, and Arg205. The active-site Proton donor is Lys60.

This sequence belongs to the OMP decarboxylase family. Type 1 subfamily. In terms of assembly, homodimer.

The enzyme catalyses orotidine 5'-phosphate + H(+) = UMP + CO2. Its pathway is pyrimidine metabolism; UMP biosynthesis via de novo pathway; UMP from orotate: step 2/2. In terms of biological role, catalyzes the decarboxylation of orotidine 5'-monophosphate (OMP) to uridine 5'-monophosphate (UMP). The sequence is that of Orotidine 5'-phosphate decarboxylase from Wolbachia pipientis subsp. Culex pipiens (strain wPip).